The following is a 174-amino-acid chain: Fimbria A protein (174 aa).

The first 22 residues, 1–22, serve as a signal peptide directing secretion; it reads MKLNKIMLATVLAFGVSSLANA. Residues C41 and C80 are joined by a disulfide bond.

This sequence belongs to the fimbrial protein family.

Its subcellular location is the fimbrium. Functionally, major structural component of mannose-resistant fimbriae of Serratia marcescens. The sequence is that of Fimbria A protein (smfA) from Serratia marcescens.